A 25-amino-acid chain; its full sequence is Granule-bound starch synthase 1, chloroplastic/amyloplastic (25 aa).

K16 is a binding site for ADP-alpha-D-glucose.

This sequence belongs to the glycosyltransferase 1 family. Bacterial/plant glycogen synthase subfamily. Expressed in endosperm.

The protein resides in the plastid. The protein localises to the chloroplast. It localises to the amyloplast. It carries out the reaction an NDP-alpha-D-glucose + [(1-&gt;4)-alpha-D-glucosyl](n) = [(1-&gt;4)-alpha-D-glucosyl](n+1) + a ribonucleoside 5'-diphosphate + H(+). It participates in glycan biosynthesis; starch biosynthesis. In terms of biological role, required for the synthesis of amylose in endosperm. In Fagopyrum esculentum (Common buckwheat), this protein is Granule-bound starch synthase 1, chloroplastic/amyloplastic.